The primary structure comprises 331 residues: Laforin (331 aa).

Residues 1-124 (MRFRFGVVVP…NNLVDGVYCL (124 aa)) form the CBM20 domain. The residue at position 25 (S25) is a Phosphoserine; by AMPK. Residues W32, K87, 103–107 (GPHHD), D197, D235, and R241 each bind substrate. The 168-residue stretch at 156–323 (HYSRILPNIW…EEDFFQKFGK (168 aa)) folds into the Tyrosine-protein phosphatase domain. Residue C266 is the Phosphocysteine intermediate of the active site. The short motif at 266–272 (CNAGVGR) is the Glucan phosphatase signature motif CXAGXGR element. Substrate is bound by residues 267 to 272 (NAGVGR) and Y304.

This sequence belongs to the protein-tyrosine phosphatase family. In terms of assembly, homodimer. Interacts with itself. Interacts with PPP1R3B, PPP1R3C, PPP1R3D, HIRIP5, and EPM2AIP1. Binds glycogen and Lafora bodies. Interacts with NHLRC1/malin (via the NHL repeats). Forms a complex with NHLRC1/malin and HSP70. Interacts with PPP1R3D; in the presence of NHLC1/malin the interaction leads to ubiquitination and autophagic degradation of PPP1R3D. Interacts (via the phosphatase domain) with MAPT/Tau; the interaction dephosphorylates MAPT. Interacts with PRDM8. In terms of processing, polyubiquitinated by NHLRC1/malin. Phosphorylation on Ser-25 by AMPK affects the phosphatase activity of the enzyme and its ability to homodimerize and interact with NHLRC1, PPP1R3C or PRKAA2.

It localises to the cytoplasm. The protein resides in the endoplasmic reticulum membrane. It is found in the cell membrane. The catalysed reaction is O-phospho-L-tyrosyl-[protein] + H2O = L-tyrosyl-[protein] + phosphate. It carries out the reaction O-phospho-L-seryl-[protein] + H2O = L-seryl-[protein] + phosphate. It catalyses the reaction O-phospho-L-threonyl-[protein] + H2O = L-threonyl-[protein] + phosphate. In terms of biological role, plays an important role in preventing glycogen hyperphosphorylation and the formation of insoluble aggregates, via its activity as glycogen phosphatase, and by promoting the ubiquitination of proteins involved in glycogen metabolism via its interaction with the E3 ubiquitin ligase NHLRC1/malin. Dephosphorylates phosphotyrosine and synthetic substrates, such as para-nitrophenylphosphate (pNPP), and has low activity with phosphoserine and phosphothreonine substrates (in vitro). Has also been shown to dephosphorylate MAPT. Shows strong phosphatase activity towards complex carbohydrates in vitro, avoiding glycogen hyperphosphorylation which is associated with reduced branching and formation of insoluble aggregates. Forms a complex with NHLRC1/malin and HSP70, which suppresses the cellular toxicity of misfolded proteins by promoting their degradation through the ubiquitin-proteasome system (UPS). Acts as a scaffold protein to facilitate PPP1R3C/PTG ubiquitination by NHLRC1/malin. Also promotes proteasome-independent protein degradation through the macroautophagy pathway. The chain is Laforin (EPM2A) from Canis lupus familiaris (Dog).